A 130-amino-acid chain; its full sequence is MTSLLEVLGAPEVSVCGNAGQPMTLPEPVRDALYNVVLALSQGKGISLVPRHLKLTTQEAADLLNISRPTLVRLLEDGRIPFEKPGRHRRVSLDALLEYQQETRSNRRAALGELSRDALGELQAALAEKK.

Possibly the antitoxin component of a type II toxin-antitoxin (TA) system. Its cognate toxin is VapC50. The protein is Putative antitoxin VapB50 of Mycobacterium tuberculosis (strain ATCC 25618 / H37Rv).